The chain runs to 335 residues: Flagellar P-ring protein (335 aa).

An N-terminal signal peptide occupies residues 1 to 17 (MNKPMLMLITFATSLLA).

This sequence belongs to the FlgI family. In terms of assembly, the basal body constitutes a major portion of the flagellar organelle and consists of four rings (L,P,S, and M) mounted on a central rod.

It localises to the periplasm. The protein resides in the bacterial flagellum basal body. Its function is as follows. Assembles around the rod to form the L-ring and probably protects the motor/basal body from shearing forces during rotation. This Borreliella burgdorferi (strain ZS7) (Borrelia burgdorferi) protein is Flagellar P-ring protein.